The following is a 125-amino-acid chain: Fluoride-specific ion channel FluC (125 aa).

4 helical membrane passes run 1 to 21 (MIQA…RYYV), 32 to 52 (AFPW…GVFA), 68 to 88 (LLIT…LDAI), and 101 to 121 (IYIA…LAVM). Residues Gly-75 and Thr-78 each coordinate Na(+).

The protein belongs to the fluoride channel Fluc/FEX (TC 1.A.43) family.

Its subcellular location is the cell inner membrane. It catalyses the reaction fluoride(in) = fluoride(out). Na(+) is not transported, but it plays an essential structural role and its presence is essential for fluoride channel function. In terms of biological role, fluoride-specific ion channel. Important for reducing fluoride concentration in the cell, thus reducing its toxicity. This is Fluoride-specific ion channel FluC from Rhizobium etli (strain CIAT 652).